A 245-amino-acid polypeptide reads, in one-letter code: MDDTSTLTDVKEYPDTEVQKNRVLTLEEWREKWVDGKIGFHQEQGHQLLKKHLDTFLKGENVLRVFFPLCGKAVEMKWFADRGHCVVGVEISELGIREFFTEQNLSYSEEPIMEIPGAKVFKSSSGNISLYCCNLFDLPRVNIGKFDRIWDRGALVAVNPGDRKCYTDIMLSLTRKGFRYLLAVLSYDPTKHPGPPFYVPDAEIKNLFGSTCNIHCLEKVDVFEERHKSWGIDYIVEKLYLLTEK.

29–40 (WREKWVDGKIGF) contacts S-adenosyl-L-methionine. Phe40 serves as a coordination point for substrate. Position 58 is an N6-acetyllysine (Lys58). The S-adenosyl-L-methionine site is built by Leu69, Glu90, and Arg152.

The protein belongs to the class I-like SAM-binding methyltransferase superfamily. TPMT family. Monomer.

It localises to the cytoplasm. The enzyme catalyses S-adenosyl-L-methionine + a thiopurine = S-adenosyl-L-homocysteine + a thiopurine S-methylether.. This Felis catus (Cat) protein is Thiopurine S-methyltransferase (TPMT).